We begin with the raw amino-acid sequence, 118 residues long: Large ribosomal subunit protein bL19 (118 aa).

It belongs to the bacterial ribosomal protein bL19 family.

This protein is located at the 30S-50S ribosomal subunit interface and may play a role in the structure and function of the aminoacyl-tRNA binding site. The chain is Large ribosomal subunit protein bL19 from Wolinella succinogenes (strain ATCC 29543 / DSM 1740 / CCUG 13145 / JCM 31913 / LMG 7466 / NCTC 11488 / FDC 602W) (Vibrio succinogenes).